Here is a 407-residue protein sequence, read N- to C-terminus: Probable tRNA sulfurtransferase (407 aa).

One can recognise a THUMP domain in the interval 61–165 (NEITYRLSKI…LDAIYMYEEV (105 aa)). Residues 183 to 184 (ML), 208 to 209 (HF), R265, G287, and Q296 contribute to the ATP site.

This sequence belongs to the ThiI family.

The protein resides in the cytoplasm. It catalyses the reaction [ThiI sulfur-carrier protein]-S-sulfanyl-L-cysteine + a uridine in tRNA + 2 reduced [2Fe-2S]-[ferredoxin] + ATP + H(+) = [ThiI sulfur-carrier protein]-L-cysteine + a 4-thiouridine in tRNA + 2 oxidized [2Fe-2S]-[ferredoxin] + AMP + diphosphate. The catalysed reaction is [ThiS sulfur-carrier protein]-C-terminal Gly-Gly-AMP + S-sulfanyl-L-cysteinyl-[cysteine desulfurase] + AH2 = [ThiS sulfur-carrier protein]-C-terminal-Gly-aminoethanethioate + L-cysteinyl-[cysteine desulfurase] + A + AMP + 2 H(+). It functions in the pathway cofactor biosynthesis; thiamine diphosphate biosynthesis. Its function is as follows. Catalyzes the ATP-dependent transfer of a sulfur to tRNA to produce 4-thiouridine in position 8 of tRNAs, which functions as a near-UV photosensor. Also catalyzes the transfer of sulfur to the sulfur carrier protein ThiS, forming ThiS-thiocarboxylate. This is a step in the synthesis of thiazole, in the thiamine biosynthesis pathway. The sulfur is donated as persulfide by IscS. This chain is Probable tRNA sulfurtransferase, found in Staphylococcus aureus (strain JH1).